The sequence spans 229 residues: MKRKNIALIPAAGIGARFGADKPKQYVEIGSKTVLEHTIGIFERHEAVDLTVVVVSPEDTFADKVQTAFPQVRVWKNGGQTRAETVRNGVAKLLEIGLASADDNILVHDAARCCLPSEALTRLIEQAGNAAEGGILAISIADTLKRAEGGQISATVERTSLWQAQTPQLFRAGLLHRALAAENLDGITDEASAVEKLGIRPLLVQGDARNLKLTQPQDAYIVRLLLNAV.

It belongs to the IspD/TarI cytidylyltransferase family. IspD subfamily.

It carries out the reaction 2-C-methyl-D-erythritol 4-phosphate + CTP + H(+) = 4-CDP-2-C-methyl-D-erythritol + diphosphate. It participates in isoprenoid biosynthesis; isopentenyl diphosphate biosynthesis via DXP pathway; isopentenyl diphosphate from 1-deoxy-D-xylulose 5-phosphate: step 2/6. Functionally, catalyzes the formation of 4-diphosphocytidyl-2-C-methyl-D-erythritol from CTP and 2-C-methyl-D-erythritol 4-phosphate (MEP). The sequence is that of 2-C-methyl-D-erythritol 4-phosphate cytidylyltransferase from Neisseria meningitidis serogroup C (strain 053442).